A 38-amino-acid chain; its full sequence is Large ribosomal subunit protein bL36 (38 aa).

This sequence belongs to the bacterial ribosomal protein bL36 family.

The protein is Large ribosomal subunit protein bL36 of Chlorobium phaeobacteroides (strain BS1).